A 940-amino-acid chain; its full sequence is Gamma-aminobutyric acid type B receptor subunit 2 (940 aa).

Residues methionine 1–glycine 40 form the signal peptide. The Extracellular portion of the chain corresponds to tryptophan 41 to serine 482. N-linked (GlcNAc...) asparagine glycosylation is present at asparagine 89. Disulfide bonds link cysteine 107/cysteine 134, cysteine 236/cysteine 265, and cysteine 264/cysteine 301. N-linked (GlcNAc...) asparagine glycosylation is found at asparagine 297, asparagine 388, asparagine 403, and asparagine 452. A helical transmembrane segment spans residues isoleucine 483 to isoleucine 503. The Cytoplasmic portion of the chain corresponds to lysine 504–leucine 521. The helical transmembrane segment at isoleucine 522–phenylalanine 542 threads the bilayer. The Extracellular portion of the chain corresponds to valine 543–threonine 550. Residues leucine 551 to phenylalanine 571 traverse the membrane as a helical segment. Residues alanine 572–leucine 596 are Cytoplasmic-facing. Residues leucine 597–valine 617 form a helical membrane-spanning segment. The Extracellular segment spans residues aspartate 618–threonine 653. A helical transmembrane segment spans residues isoleucine 654–alanine 674. The Cytoplasmic segment spans residues tryptophan 675–tyrosine 690. A helical membrane pass occupies residues isoleucine 691 to leucine 711. At threonine 712–glutamine 719 the chain is on the extracellular side. Residues phenylalanine 720–valine 740 traverse the membrane as a helical segment. At proline 741–leucine 940 the chain is on the cytoplasmic side. The interval threonine 762–glycine 789 is disordered. Polar residues predominate over residues threonine 772–arginine 786. 2 positions are modified to phosphoserine: serine 775 and serine 778. The stretch at glutamine 781–threonine 818 forms a coiled coil. Threonine 818 is modified (phosphothreonine). Serine 883, serine 892, serine 912, serine 915, serine 919, and serine 923 each carry phosphoserine.

This sequence belongs to the G-protein coupled receptor 3 family. GABA-B receptor subfamily. In terms of assembly, heterodimer of GABBR1 and GABBR2. Homodimers may form, but are inactive. Interacts (via C-terminus) with ATF4 (via leucine zipper domain).

It localises to the cell membrane. Its subcellular location is the postsynaptic cell membrane. In terms of biological role, component of a heterodimeric G-protein coupled receptor for GABA, formed by GABBR1 and GABBR2. Within the heterodimeric GABA receptor, only GABBR1 seems to bind agonists, while GABBR2 mediates coupling to G proteins. Ligand binding causes a conformation change that triggers signaling via guanine nucleotide-binding proteins (G proteins) and modulates the activity of down-stream effectors, such as adenylate cyclase. Signaling inhibits adenylate cyclase, stimulates phospholipase A2, activates potassium channels, inactivates voltage-dependent calcium-channels and modulates inositol phospholipid hydrolysis. Plays a critical role in the fine-tuning of inhibitory synaptic transmission. Pre-synaptic GABA receptor inhibits neurotransmitter release by down-regulating high-voltage activated calcium channels, whereas postsynaptic GABA receptor decreases neuronal excitability by activating a prominent inwardly rectifying potassium (Kir) conductance that underlies the late inhibitory postsynaptic potentials. Not only implicated in synaptic inhibition but also in hippocampal long-term potentiation, slow wave sleep, muscle relaxation and antinociception. Interacts with KCTD8, KCTD12 and KCTD16; this interaction determines the pharmacology and kinetics of the receptor response, the KCTD proteins markedly accelerating the GABA-B response, although to different extents. This chain is Gamma-aminobutyric acid type B receptor subunit 2 (Gabbr2), found in Mus musculus (Mouse).